We begin with the raw amino-acid sequence, 87 residues long: Large ribosomal subunit protein bL27c (87 aa).

A disordered region spans residues 1-20 (MAHKKGSGSTKNGRDSRSQR).

The protein belongs to the bacterial ribosomal protein bL27 family.

The protein resides in the plastid. Its subcellular location is the chloroplast. In Gracilaria tenuistipitata var. liui (Red alga), this protein is Large ribosomal subunit protein bL27c.